We begin with the raw amino-acid sequence, 596 residues long: Chitooligosaccharidolytic beta-N-acetylglucosaminidase (596 aa).

The N-terminal stretch at methionine 1 to alanine 23 is a signal peptide. Asparagine 166, asparagine 264, and asparagine 377 each carry an N-linked (GlcNAc...) asparagine glycan.

This sequence belongs to the glycosyl hydrolase 20 family.

The enzyme catalyses Hydrolysis of terminal non-reducing N-acetyl-D-hexosamine residues in N-acetyl-beta-D-hexosaminides.. Active during metamorphosis to degrade chitin. This is Chitooligosaccharidolytic beta-N-acetylglucosaminidase from Bombyx mori (Silk moth).